Reading from the N-terminus, the 356-residue chain is Dihydroorotate dehydrogenase (quinone) (356 aa).

Residues 66–70 and threonine 90 contribute to the FMN site; that span reads AGFDK. Lysine 70 serves as a coordination point for substrate. 115–119 is a binding site for substrate; the sequence is NRMGF. Positions 143 and 176 each coordinate FMN. Asparagine 176 is a substrate binding site. The Nucleophile role is filled by serine 179. Residue asparagine 181 participates in substrate binding. Lysine 212 and threonine 240 together coordinate FMN. 241–242 contacts substrate; the sequence is NT. FMN contacts are provided by residues glycine 266, glycine 295, and 316 to 317; that span reads YT.

It belongs to the dihydroorotate dehydrogenase family. Type 2 subfamily. As to quaternary structure, monomer. The cofactor is FMN.

It localises to the cell membrane. It carries out the reaction (S)-dihydroorotate + a quinone = orotate + a quinol. It functions in the pathway pyrimidine metabolism; UMP biosynthesis via de novo pathway; orotate from (S)-dihydroorotate (quinone route): step 1/1. Catalyzes the conversion of dihydroorotate to orotate with quinone as electron acceptor. The protein is Dihydroorotate dehydrogenase (quinone) of Rhodococcus erythropolis (strain PR4 / NBRC 100887).